The primary structure comprises 104 residues: Nucleoid-associated protein EF_2780 (104 aa).

Belongs to the YbaB/EbfC family. In terms of assembly, homodimer.

The protein resides in the cytoplasm. The protein localises to the nucleoid. Its function is as follows. Binds to DNA and alters its conformation. May be involved in regulation of gene expression, nucleoid organization and DNA protection. The polypeptide is Nucleoid-associated protein EF_2780 (Enterococcus faecalis (strain ATCC 700802 / V583)).